Reading from the N-terminus, the 250-residue chain is Triosephosphate isomerase (250 aa).

Asparagine 9 to lysine 11 is a substrate binding site. Histidine 95 acts as the Electrophile in catalysis. Glutamate 167 (proton acceptor) is an active-site residue. Substrate is bound by residues glycine 173, serine 213, and glycine 234 to glycine 235.

The protein belongs to the triosephosphate isomerase family. Homodimer.

The protein localises to the cytoplasm. The catalysed reaction is D-glyceraldehyde 3-phosphate = dihydroxyacetone phosphate. The protein operates within carbohydrate biosynthesis; gluconeogenesis. Its pathway is carbohydrate degradation; glycolysis; D-glyceraldehyde 3-phosphate from glycerone phosphate: step 1/1. Involved in the gluconeogenesis. Catalyzes stereospecifically the conversion of dihydroxyacetone phosphate (DHAP) to D-glyceraldehyde-3-phosphate (G3P). This is Triosephosphate isomerase from Flavobacterium psychrophilum (strain ATCC 49511 / DSM 21280 / CIP 103535 / JIP02/86).